Consider the following 236-residue polypeptide: Glucosamine-6-phosphate deaminase (236 aa).

Aspartate 62 (proton acceptor; for enolization step) is an active-site residue. The active-site For ring-opening step is the asparagine 128. Residue histidine 130 is the Proton acceptor; for ring-opening step of the active site. Glutamate 135 serves as the catalytic For ring-opening step.

It belongs to the glucosamine/galactosamine-6-phosphate isomerase family. NagB subfamily.

The catalysed reaction is alpha-D-glucosamine 6-phosphate + H2O = beta-D-fructose 6-phosphate + NH4(+). It functions in the pathway amino-sugar metabolism; N-acetylneuraminate degradation; D-fructose 6-phosphate from N-acetylneuraminate: step 5/5. Functionally, catalyzes the reversible isomerization-deamination of glucosamine 6-phosphate (GlcN6P) to form fructose 6-phosphate (Fru6P) and ammonium ion. The chain is Glucosamine-6-phosphate deaminase from Oenococcus oeni (strain ATCC BAA-331 / PSU-1).